Reading from the N-terminus, the 257-residue chain is 3-methyl-2-oxobutanoate hydroxymethyltransferase (257 aa).

Asp42 and Asp81 together coordinate Mg(2+). 3-methyl-2-oxobutanoate-binding positions include 42–43 (DS), Asp81, and Lys110. Glu112 provides a ligand contact to Mg(2+). Glu176 acts as the Proton acceptor in catalysis.

It belongs to the PanB family. Homodecamer; pentamer of dimers. Requires Mg(2+) as cofactor.

It is found in the cytoplasm. The enzyme catalyses 3-methyl-2-oxobutanoate + (6R)-5,10-methylene-5,6,7,8-tetrahydrofolate + H2O = 2-dehydropantoate + (6S)-5,6,7,8-tetrahydrofolate. Its pathway is cofactor biosynthesis; (R)-pantothenate biosynthesis; (R)-pantoate from 3-methyl-2-oxobutanoate: step 1/2. In terms of biological role, catalyzes the reversible reaction in which hydroxymethyl group from 5,10-methylenetetrahydrofolate is transferred onto alpha-ketoisovalerate to form ketopantoate. The protein is 3-methyl-2-oxobutanoate hydroxymethyltransferase of Pelagibacter ubique (strain HTCC1062).